Consider the following 413-residue polypeptide: Eukaryotic initiation factor 4A-9 (413 aa).

A Q motif motif is present at residues 40 to 68 (HSFDAMGLKENLLRGIYAYGFEKPSAIQQ). The Helicase ATP-binding domain occupies 71–241 (IVPFCKGLDV…RKFMNKPVRI (171 aa)). 84 to 91 (AQSGTGKT) is an ATP binding site. The short motif at 189 to 192 (DEAD) is the DEAD box element. The 162-residue stretch at 252 to 413 (GIKQFYVNVD…ELPANVADLL (162 aa)) folds into the Helicase C-terminal domain.

It belongs to the DEAD box helicase family. eIF4A subfamily. EIF4F is a multi-subunit complex, the composition of which varies with external and internal environmental conditions. It is composed of at least EIF4A, EIF4E and EIF4G.

The catalysed reaction is ATP + H2O = ADP + phosphate + H(+). Its function is as follows. ATP-dependent RNA helicase which is a subunit of the eIF4F complex involved in cap recognition and is required for mRNA binding to ribosome. In the current model of translation initiation, eIF4A unwinds RNA secondary structures in the 5'-UTR of mRNAs which is necessary to allow efficient binding of the small ribosomal subunit, and subsequent scanning for the initiator codon. This chain is Eukaryotic initiation factor 4A-9, found in Nicotiana tabacum (Common tobacco).